The chain runs to 476 residues: Protein transport protein Sec61 subunit alpha isoform 2 (476 aa).

The Cytoplasmic segment spans residues 1-32 (MGIKFLEVIKPFCAVLPEIQKPERKIQFREKV). A helical transmembrane segment spans residues 33-53 (LWTAITLFIFLVCCQIPLFGI). At 54 to 75 (MSSDSADPFYWMRVILASNRGT) the chain is on the lumenal side. A helical membrane pass occupies residues 76–96 (LMELGISPIVTSGLIMQLLAG). The Cytoplasmic segment spans residues 97–117 (AKIIEVGDTPKDRALFNGAQK). Residues 118 to 138 (LFGMIITIGQAIVYVMTGMYG) form a helical membrane-spanning segment. Topologically, residues 139-144 (DPAEMG) are lumenal. Residues 145–165 (AGICLLIIIQLFVAGLIVLLL) form a helical membrane-spanning segment. Topologically, residues 166 to 172 (DELLQKG) are cytoplasmic. Residues 173 to 193 (YGLGSGISLFIATNICETIVW) form a helical membrane-spanning segment. Residues 194–240 (KASSPTTINTGRGTEFEGAVIALFHLLATRTDKVRALREAFYRQNLP) lie on the Lumenal side of the membrane. The helical transmembrane segment at 241-261 (NLMNLIATVFVFAVVIYFQGF) threads the bilayer. The Cytoplasmic portion of the chain corresponds to 262-288 (RVDLPIKSARYRGQYSSYPIKLFYTSN). The chain crosses the membrane as a helical span at residues 289-309 (IPIILQSALVSNLYVISQMLS). At 310–353 (VRFSGNFLVNLLGQWADVSGGGPARSYPVGGLCYYLSPPESMGA) the chain is on the lumenal side. Residues 354-374 (ILEDPVHVVVYIIFMLGSCAF) form a helical membrane-spanning segment. Residues 375–420 (FSKTWIEVSGSSAKDVAKQLKEQQMVMRGHRDTSMVHELNRYIPTA) are Cytoplasmic-facing. A run of 2 helical transmembrane segments spans residues 421 to 441 (AAFG…LGAI) and 442 to 462 (GSGT…EIFV). Residues 463–476 (KEQAEVGGMGALFF) lie on the Cytoplasmic side of the membrane.

It belongs to the SecY/SEC61-alpha family. As to quaternary structure, the SEC61 channel-forming translocon complex consists of channel-forming core components SEC61A1, SEC61B and SEC61G and different auxiliary components such as SEC62 and SEC63.

It is found in the endoplasmic reticulum membrane. Its function is as follows. Component of SEC61 channel-forming translocon complex that mediates transport of signal peptide-containing precursor polypeptides across the endoplasmic reticulum (ER). Forms a ribosome receptor and a gated pore in the ER membrane, both functions required for cotranslational translocation of nascent polypeptides. In Pongo abelii (Sumatran orangutan), this protein is Protein transport protein Sec61 subunit alpha isoform 2 (SEC61A2).